A 119-amino-acid polypeptide reads, in one-letter code: Large ribosomal subunit protein uL14 (119 aa).

This sequence belongs to the universal ribosomal protein uL14 family. Part of the 50S ribosomal subunit. Forms a cluster with proteins L3 and L19. In the 70S ribosome, L14 and L19 interact and together make contacts with the 16S rRNA in bridges B5 and B8.

Its function is as follows. Binds to 23S rRNA. Forms part of two intersubunit bridges in the 70S ribosome. The protein is Large ribosomal subunit protein uL14 of Neorickettsia sennetsu (strain ATCC VR-367 / Miyayama) (Ehrlichia sennetsu).